Here is a 315-residue protein sequence, read N- to C-terminus: Putative S-adenosyl-L-methionine-dependent methyltransferase MAV_4557 (315 aa).

Residues aspartate 134 and aspartate 163–leucine 164 each bind S-adenosyl-L-methionine.

The protein belongs to the UPF0677 family.

In terms of biological role, exhibits S-adenosyl-L-methionine-dependent methyltransferase activity. In Mycobacterium avium (strain 104), this protein is Putative S-adenosyl-L-methionine-dependent methyltransferase MAV_4557.